A 226-amino-acid polypeptide reads, in one-letter code: Deoxyribose-phosphate aldolase (226 aa).

The active-site Proton donor/acceptor is D84. The active-site Schiff-base intermediate with acetaldehyde is K146. K188 functions as the Proton donor/acceptor in the catalytic mechanism.

It belongs to the DeoC/FbaB aldolase family. DeoC type 1 subfamily. As to quaternary structure, homodimer.

It localises to the cytoplasm. The enzyme catalyses 2-deoxy-D-ribose 5-phosphate = D-glyceraldehyde 3-phosphate + acetaldehyde. It functions in the pathway carbohydrate degradation; 2-deoxy-D-ribose 1-phosphate degradation; D-glyceraldehyde 3-phosphate and acetaldehyde from 2-deoxy-alpha-D-ribose 1-phosphate: step 2/2. Functionally, catalyzes a reversible aldol reaction between acetaldehyde and D-glyceraldehyde 3-phosphate to generate 2-deoxy-D-ribose 5-phosphate. In Pyrobaculum aerophilum (strain ATCC 51768 / DSM 7523 / JCM 9630 / CIP 104966 / NBRC 100827 / IM2), this protein is Deoxyribose-phosphate aldolase.